The primary structure comprises 29 residues: Cytochrome b6-f complex subunit 8 (29 aa).

Residues 3–23 (IVSLAWAGLMVVFTFSLSLVV) traverse the membrane as a helical segment.

It belongs to the PetN family. The 4 large subunits of the cytochrome b6-f complex are cytochrome b6, subunit IV (17 kDa polypeptide, PetD), cytochrome f and the Rieske protein, while the 4 small subunits are PetG, PetL, PetM and PetN. The complex functions as a dimer.

It localises to the plastid. The protein localises to the chloroplast thylakoid membrane. In terms of biological role, component of the cytochrome b6-f complex, which mediates electron transfer between photosystem II (PSII) and photosystem I (PSI), cyclic electron flow around PSI, and state transitions. This is Cytochrome b6-f complex subunit 8 from Arabis hirsuta (Hairy rock-cress).